The sequence spans 156 residues: Small ribosomal subunit protein uS7 (156 aa).

It belongs to the universal ribosomal protein uS7 family. As to quaternary structure, part of the 30S ribosomal subunit. Contacts proteins S9 and S11.

Its function is as follows. One of the primary rRNA binding proteins, it binds directly to 16S rRNA where it nucleates assembly of the head domain of the 30S subunit. Is located at the subunit interface close to the decoding center, probably blocks exit of the E-site tRNA. In Streptococcus mutans serotype c (strain ATCC 700610 / UA159), this protein is Small ribosomal subunit protein uS7.